We begin with the raw amino-acid sequence, 204 residues long: Probable chorismate pyruvate-lyase (204 aa).

Residues arginine 78, leucine 131, and glutamate 190 each contribute to the substrate site.

Belongs to the UbiC family.

The protein localises to the cytoplasm. It carries out the reaction chorismate = 4-hydroxybenzoate + pyruvate. Its pathway is cofactor biosynthesis; ubiquinone biosynthesis. Its function is as follows. Removes the pyruvyl group from chorismate, with concomitant aromatization of the ring, to provide 4-hydroxybenzoate (4HB) for the ubiquinone pathway. The chain is Probable chorismate pyruvate-lyase from Shewanella frigidimarina (strain NCIMB 400).